The primary structure comprises 290 residues: Nucleoid occlusion protein (290 aa).

A DNA-binding region (H-T-H motif) is located at residues Glu-153–Leu-172.

Belongs to the ParB family.

Its subcellular location is the cytoplasm. The protein localises to the nucleoid. Functionally, effects nucleoid occlusion by binding relatively nonspecifically to DNA and preventing the assembly of the division machinery in the vicinity of the nucleoid, especially under conditions that disturb the cell cycle. It helps to coordinate cell division and chromosome segregation by preventing the formation of the Z ring through the nucleoid, which would cause chromosome breakage. This Bacillus cereus (strain AH187) protein is Nucleoid occlusion protein.